The following is a 396-amino-acid chain: Ribosomal RNA large subunit methyltransferase I (396 aa).

The PUA domain maps to 2–79 (AIRIKLKPGR…REEEIDREFF (78 aa)).

This sequence belongs to the methyltransferase superfamily. RlmI family.

The protein localises to the cytoplasm. The enzyme catalyses cytidine(1962) in 23S rRNA + S-adenosyl-L-methionine = 5-methylcytidine(1962) in 23S rRNA + S-adenosyl-L-homocysteine + H(+). Functionally, specifically methylates the cytosine at position 1962 (m5C1962) of 23S rRNA. The protein is Ribosomal RNA large subunit methyltransferase I of Shewanella oneidensis (strain ATCC 700550 / JCM 31522 / CIP 106686 / LMG 19005 / NCIMB 14063 / MR-1).